The sequence spans 131 residues: Glycine cleavage system H protein (131 aa).

Residues 24–106 (TVRIGITDYA…YGEGWLVDLE (83 aa)) enclose the Lipoyl-binding domain. Lys-65 carries the N6-lipoyllysine modification.

This sequence belongs to the GcvH family. In terms of assembly, the glycine cleavage system is composed of four proteins: P, T, L and H. (R)-lipoate serves as cofactor.

Functionally, the glycine cleavage system catalyzes the degradation of glycine. The H protein shuttles the methylamine group of glycine from the P protein to the T protein. This is Glycine cleavage system H protein from Mycobacteroides abscessus (strain ATCC 19977 / DSM 44196 / CCUG 20993 / CIP 104536 / JCM 13569 / NCTC 13031 / TMC 1543 / L948) (Mycobacterium abscessus).